The following is a 129-amino-acid chain: Replication initiation control protein YabA (129 aa).

Positions 52-71 (LSLTDEATPEPKAETEAEHG) are disordered. The segment covering 60–71 (PEPKAETEAEHG) has biased composition (basic and acidic residues). Zn(2+) contacts are provided by His-103, Cys-105, Cys-119, and Cys-122.

The protein belongs to the YabA family. As to quaternary structure, homotetramer. Interacts with both DnaA and DnaN, acting as a bridge between these two proteins. Requires Zn(2+) as cofactor.

The protein localises to the cytoplasm. The protein resides in the nucleoid. Functionally, involved in control of chromosome replication initiation. Inhibits the cooperative binding of DnaA to the oriC region, thus negatively regulating initiation of chromosome replication. Inhibits the ability of DnaA-ATP to form a helix on DNA; does not disassemble preformed DnaA-DNA helices. Decreases the residence time of DnaA on the chromosome at its binding sites (oriC, replication forks and promoter-binding sites). Tethers DnaA to the replication machinery via the DNA polymerase beta sliding clamp subunit (dnaN). Associates with oriC and other DnaA targets on the chromosome in a DnaA-dependent manner. The protein is Replication initiation control protein YabA of Listeria monocytogenes serotype 4a (strain HCC23).